Reading from the N-terminus, the 147-residue chain is MENKFDHMKLENQLCFLLYASSREMTKQYKPLLDKLNITYPQYLALLLLWEHETLTVKKMGEQLYLDSGTLTPMLKRMEQQGLITRKRSEEDERSVLISLTEDGALLKEKAVDIPGTILGLSKQSGEDLKQLKSALYTLLETLHQKN.

Positions Glu11–Glu141 constitute an HTH marR-type domain. Cys15 is modified (cysteine sulfenic acid (-SOH); alternate). The residue at position 15 (Cys15) is an S-bacillithiol cysteine disulfide; alternate. An S-cysteinyl cysteine; alternate modification is found at Cys15. The segment at residues Cys15–Phe16 is a cross-link (n,N-(cysteine-1,S-diyl)phenylalanine (Cys-Phe); alternate). A DNA-binding region (H-T-H motif) is located at residues Val57–Gln80.

As to quaternary structure, homodimer. Post-translationally, cys-15 is oxidized by organic peroxides to cysteine sulfenic acid (Cys-SOH). This can react with the alpha-amido of the following residue to form the sulfenamide cross-link. Oxidation or cross-linking results in the loss of DNA-binding activity and the inactivation of repressor function. Both the cysteine sulfenic acid and the sulfenamide cross-link can react with free cysteine or bacillithiol (BSH) to form mixed disulfides. Further reduction of OhrR by free sulfhydryl compounds restores repressor activity.

The protein localises to the cytoplasm. With respect to regulation, inactivated by oxidation of Cys-15 to a sulfenic acid. Organic peroxide sensor. Represses the expression of the peroxide-inducible gene ohrA by cooperative binding to two inverted repeat elements. The sequence is that of Organic hydroperoxide resistance transcriptional regulator (ohrR) from Bacillus subtilis (strain 168).